Here is a 285-residue protein sequence, read N- to C-terminus: ATP synthase gamma chain (285 aa).

The protein belongs to the ATPase gamma chain family. F-type ATPases have 2 components, CF(1) - the catalytic core - and CF(0) - the membrane proton channel. CF(1) has five subunits: alpha(3), beta(3), gamma(1), delta(1), epsilon(1). CF(0) has three main subunits: a, b and c.

Its subcellular location is the cell membrane. Functionally, produces ATP from ADP in the presence of a proton gradient across the membrane. The gamma chain is believed to be important in regulating ATPase activity and the flow of protons through the CF(0) complex. This is ATP synthase gamma chain from Lysinibacillus sphaericus (strain C3-41).